The chain runs to 431 residues: MKQTVSHAKRLRGAISVPGDKSISHRSVLFNALAEGNAEITGFLPGADCLSSIACLRQMGVEIEHSDDKVRVFGRGLRGLREPSDVLDCGNSGTTLRLLAGLLAGQPFLSVLTGDASLRSRPQKRIVEPLRQLGAKLDGRDNGNRAPLVIRGTTIHGGNYELPIASAQVKSALLLAGLTGDAPMRLSGKIVSRDHTERMLIAMGIDLTVKDDEIVLYPPSHPVFPYPLSLHVPGDPSSATFWWVAAAIHPDAEITTLGVGLNPSRTGALDVLKAMGADITISNERNEGAEPVGDVTVRGGGLRGTRIDGDLIPRLIDEIPVLAVAAACAVGETVVADAEELRAKETDRVATVVSELTAMGATLEATPDGMIIAGGGELQGAHVQSHGDHRIAMALAVAGLVAEGETIIDEAEAVTVSYPTFWQHYAQIKEA.

3 residues coordinate 3-phosphoshikimate: K21, S22, and R26. K21 contributes to the phosphoenolpyruvate binding site. Residues G93 and R121 each coordinate phosphoenolpyruvate. S166, Q168, S192, D317, and K344 together coordinate 3-phosphoshikimate. Position 168 (Q168) interacts with phosphoenolpyruvate. D317 serves as the catalytic Proton acceptor. R348 and R390 together coordinate phosphoenolpyruvate.

Belongs to the EPSP synthase family. Monomer.

It is found in the cytoplasm. The catalysed reaction is 3-phosphoshikimate + phosphoenolpyruvate = 5-O-(1-carboxyvinyl)-3-phosphoshikimate + phosphate. Its pathway is metabolic intermediate biosynthesis; chorismate biosynthesis; chorismate from D-erythrose 4-phosphate and phosphoenolpyruvate: step 6/7. Its function is as follows. Catalyzes the transfer of the enolpyruvyl moiety of phosphoenolpyruvate (PEP) to the 5-hydroxyl of shikimate-3-phosphate (S3P) to produce enolpyruvyl shikimate-3-phosphate and inorganic phosphate. In Herpetosiphon aurantiacus (strain ATCC 23779 / DSM 785 / 114-95), this protein is 3-phosphoshikimate 1-carboxyvinyltransferase.